A 566-amino-acid polypeptide reads, in one-letter code: Pentatricopeptide repeat-containing protein At4g11690 (566 aa).

PPR repeat units lie at residues 93–127 (KFRLYEVIINSYVQSQSLNLSISYFNEMVDNGFVP), 128–158 (GSNCFNYLLTFVVGSSSFNQWWSFFNENKSK), 162–196 (DVYSFGILIKGCCEAGEIEKSFDLLIELTEFGFSP), 197–231 (NVVIYTTLIDGCCKKGEIEKAKDLFFEMGKLGLVA), 232–266 (NERTYTVLINGLFKNGVKKQGFEMYEKMQEDGVFP), 267–301 (NLYTYNCVMNQLCKDGRTKDAFQVFDEMRERGVSC), 302–336 (NIVTYNTLIGGLCREMKLNEANKVVDQMKSDGINP), 337–371 (NLITYNTLIDGFCGVGKLGKALSLCRDLKSRGLSP), 372–406 (SLVTYNILVSGFCRKGDTSGAAKMVKEMEERGIKP), 407–441 (SKVTYTILIDTFARSDNMEKAIQLRLSMEELGLVP), 442–476 (DVHTYSVLIHGFCIKGQMNEASRLFKSMVEKNCEP), 477–511 (NEVIYNTMILGYCKEGSSYRALKLLKEMEEKELAP), and 512–546 (NVASYRYMIEVLCKERKSKEAERLVEKMIDSGIDP).

It belongs to the PPR family. P subfamily.

This chain is Pentatricopeptide repeat-containing protein At4g11690, found in Arabidopsis thaliana (Mouse-ear cress).